Here is an 867-residue protein sequence, read N- to C-terminus: Coiled-coil domain-containing protein 178 (867 aa).

Coiled-coil stretches lie at residues 153–204 (DEKC…KIDS), 233–414 (WHLE…ENQY), 445–470 (ACTK…TNES), and 662–696 (MIFY…KNKF).

This is Coiled-coil domain-containing protein 178 (CCDC178) from Homo sapiens (Human).